The following is a 500-amino-acid chain: Glucose-1-phosphate adenylyltransferase small subunit 1, chloroplastic/amyloplastic (500 aa).

The N-terminal 50 residues, 1 to 50, are a transit peptide targeting the chloroplast; sequence MAMMAMGAASWAPIPAPARAAAAFYPGRDLAAARRRRGAAARRPFVFTPR.

It belongs to the bacterial/plant glucose-1-phosphate adenylyltransferase family. In terms of assembly, heterotetramer composed of two small and two large subunits. In terms of tissue distribution, expressed in leaves.

Its subcellular location is the plastid. It localises to the chloroplast. The protein resides in the amyloplast. The enzyme catalyses alpha-D-glucose 1-phosphate + ATP + H(+) = ADP-alpha-D-glucose + diphosphate. Its pathway is glycan biosynthesis; starch biosynthesis. Its activity is regulated as follows. Activated by 3'phosphoglycerate, inhibited by orthophosphate. Allosteric regulation. Functionally, involved in synthesis of starch. Catalyzes the synthesis of ADP-glucose, a molecule that serves as an activated glycosyl donor for alpha-1,4-glucan synthesis. Essential for starch synthesis in leaf chloroplasts and endosperm amyloplasts. This is Glucose-1-phosphate adenylyltransferase small subunit 1, chloroplastic/amyloplastic from Oryza sativa subsp. japonica (Rice).